Here is a 97-residue protein sequence, read N- to C-terminus: Protein MxiI (97 aa).

The protein to S.typhimurium PrgJ.

Its function is as follows. Necessary for the secretion of IPA invasins. The sequence is that of Protein MxiI (mxiI) from Shigella flexneri.